We begin with the raw amino-acid sequence, 799 residues long: Protein scabrous (799 aa).

The signal sequence occupies residues 1–51; it reads MRDWQTFPDLQKKKVSRDHLNCPATMAGSNVLWPILLAVVLLQISVAFVSG. The disordered stretch occupies residues 287–316; sequence TRKDGSSASVEEESGSQEANQEQTGLETTA. A glycan (N-linked (GlcNAc...) asparagine) is linked at Asn372. The span at 489–498 shows a compositional bias: basic residues; sequence LNKPHKRPHH. A disordered region spans residues 489-509; it reads LNKPHKRPHHQNVQAQMPQDD. The Fibrinogen C-terminal domain occupies 533-737; sequence AIINKLPHDC…SSRMLVKRLP (205 aa). Cys542 and Cys568 are oxidised to a cystine. N-linked (GlcNAc...) asparagine glycans are attached at residues Asn587, Asn618, and Asn660. Cys687 and Cys700 are disulfide-bonded. N-linked (GlcNAc...) asparagine glycans are attached at residues Asn744 and Asn787.

Possesses five pairs of dibasic residues that may be the target of proteolytic processing.

The protein localises to the late endosome. Functionally, involved in regulation of neurogenesis. May encode a lateral inhibitor of R8 differentiation. In conjunction with Gp150, promotes Notch activation in response to Delta by regulating acquisition of insensitivity to Delta in a subset of cells. This is Protein scabrous (sca) from Drosophila melanogaster (Fruit fly).